The sequence spans 66 residues: DNA-directed RNA polymerase subunit omega (66 aa).

It belongs to the RNA polymerase subunit omega family. As to quaternary structure, the RNAP catalytic core consists of 2 alpha, 1 beta, 1 beta' and 1 omega subunit. When a sigma factor is associated with the core the holoenzyme is formed, which can initiate transcription.

The enzyme catalyses RNA(n) + a ribonucleoside 5'-triphosphate = RNA(n+1) + diphosphate. Functionally, promotes RNA polymerase assembly. Latches the N- and C-terminal regions of the beta' subunit thereby facilitating its interaction with the beta and alpha subunits. The chain is DNA-directed RNA polymerase subunit omega from Bacillus licheniformis (strain ATCC 14580 / DSM 13 / JCM 2505 / CCUG 7422 / NBRC 12200 / NCIMB 9375 / NCTC 10341 / NRRL NRS-1264 / Gibson 46).